A 492-amino-acid polypeptide reads, in one-letter code: MAPVGVEKKLLLGPNGPAVAAAGDLTSEEEEGQSLWSSILSEVSTRAGSKLPSGKNILVFGEDGSGKTTLMTKLQGAEHGKKGRGLEYLYLSVHDEDRDDHTRCNVWILDGDLYHKGLLKFAVSAESLPETLVIFVADMSRPWTVMESLQKWASVLREHIDKMKIPPEKMRELERKFVKDFQDYMEPEEGCQGSPQRRGPLTSGSDEENVALPLGDNVLTHNLGIPVLVVCTKCDAVSVLEKEHDYRDEHLDFIQSHLRRFCLQYGAALIYTSVKEEKNLDLLYKYIVHKTYGFHFTTPALVVEKDAVFIPAGWDNEKKIAILHENFTTVKPEDAYEDFIVKPPVRKLVHDKELAAEDEQVFLMKQQSLLAKQPATPTRASESPARGPSGSPRTQGRGGPASVPSSFPGTSVKKPDPNIKNNAASEGVLASFFNSLLSKKTGSPGSPGAGGVQSTAKKSGQKTVLSNVQEELDRMTRKPDSMVTNSSTENEA.

61–68 (GEDGSGKT) is a binding site for ATP. Disordered stretches follow at residues 187 to 206 (PEEG…SGSD), 371 to 423 (AKQP…KNNA), and 437 to 492 (LSKK…ENEA). Serine 194 carries the phosphoserine modification. The span at 371 to 381 (AKQPATPTRAS) shows a compositional bias: polar residues. 2 positions are modified to phosphoserine: serine 383 and serine 391. Position 397 is an omega-N-methylarginine (arginine 397). At threonine 441 the chain carries Phosphothreonine. Residues serine 443 and serine 446 each carry the phosphoserine modification. Positions 452-469 (VQSTAKKSGQKTVLSNVQ) are enriched in polar residues. A compositionally biased stretch (basic and acidic residues) spans 471 to 480 (ELDRMTRKPD). Polar residues predominate over residues 482–492 (MVTNSSTENEA).

It belongs to the dynein light intermediate chain family. In terms of assembly, homodimer. The cytoplasmic dynein 1 complex consists of two catalytic heavy chains (HCs) and a number of non-catalytic subunits presented by intermediate chains (ICs), light intermediate chains (LICs) and light chains (LCs); the composition seems to vary in respect to the IC, LIC and LC composition. The heavy chain homodimer serves as a scaffold for the probable homodimeric assembly of the respective non-catalytic subunits. The ICs and LICs bind directly to the HC dimer and the LCs assemble on the IC dimer. Interacts with DYNC1H1; DYNC1LI1 and DYNC1LI2 bind mutually exclusive to DYNC1H.

It is found in the cytoplasm. Its subcellular location is the cytoskeleton. In terms of biological role, acts as one of several non-catalytic accessory components of the cytoplasmic dynein 1 complex that are thought to be involved in linking dynein to cargos and to adapter proteins that regulate dynein function. Cytoplasmic dynein 1 acts as a motor for the intracellular retrograde motility of vesicles and organelles along microtubules. May play a role in binding dynein to membranous organelles or chromosomes. In Pongo abelii (Sumatran orangutan), this protein is Cytoplasmic dynein 1 light intermediate chain 2 (DYNC1LI2).